Reading from the N-terminus, the 186-residue chain is Peptidyl-tRNA hydrolase (186 aa).

Tyr-14 provides a ligand contact to tRNA. His-19 functions as the Proton acceptor in the catalytic mechanism. Residues Tyr-64, Asn-66, and Asn-112 each contribute to the tRNA site.

This sequence belongs to the PTH family. As to quaternary structure, monomer.

It is found in the cytoplasm. It carries out the reaction an N-acyl-L-alpha-aminoacyl-tRNA + H2O = an N-acyl-L-amino acid + a tRNA + H(+). In terms of biological role, hydrolyzes ribosome-free peptidyl-tRNAs (with 1 or more amino acids incorporated), which drop off the ribosome during protein synthesis, or as a result of ribosome stalling. Catalyzes the release of premature peptidyl moieties from peptidyl-tRNA molecules trapped in stalled 50S ribosomal subunits, and thus maintains levels of free tRNAs and 50S ribosomes. The chain is Peptidyl-tRNA hydrolase from Bacillus cereus (strain Q1).